The primary structure comprises 538 residues: MSTYPINAPGQSADAAVLIVGGGPTGLIAANELLRRGVSCRMIDRLPVAHQTSKSCTIHARSMEMMEHIGIAARYIETGVRSNGFTFNFENTDANALLDFSVLPGRYPFITIYNQNETERVLRHDLEATYSFQPEWGTQLLALNQDENGIRADLRLKDGTKQTISPRWVIGADGVRSRVRECLGIAYEGEDYEENVLQMMDVGIQDFEAGDDWIHYFIGQDKFVFVTKLPGSNYRVIISDLGGANKSNLEETREAFQGYLSSFDDHATLDEPRWATKWRVWKRMATAYRKGNVFLAGDAAHCHSPSGGSGMNVGMQDAFNLGWKIAMVERGEAKPDLLDTYHTERTPVAQQLLEGTHAMHEIIMGHGKGLTDRIELTQAPGWHDAATYRVSGMSYNYRDQLVSFNDDRLAGPSAGDRIPDAELAPRIRLFDLVRNTRPTLLVAPATEAEVAEAEKLRDLIREQWPLVKPVLVRPQGSEESIEGDVHVDSYGQLKREWGDNAKGWAALLRPDNYIHARAGLDRGDLLVQAIDAMLVRCA.

FAD-binding positions include Ala-16–Arg-45 and Tyr-288–Asp-298.

The protein belongs to the PheA/TfdB FAD monooxygenase family. Homodimer. FAD is required as a cofactor.

The enzyme catalyses pentachlorophenol + NADPH + O2 + H(+) = 2,3,5,6-tetrachloro-1,4-benzoquinone + chloride + NADP(+) + H2O. The catalysed reaction is 2,3,5,6-tetrachlorophenol + NADPH + O2 = 2,3,5,6-tetrachlorohydroquinone + NADP(+) + H2O. It functions in the pathway xenobiotic degradation; pentachlorophenol degradation. In terms of biological role, dechlorination of pentachlorophenol to tetrachlorobenzoquinone. Also removes hydrogen and nitro, amino, and cyano groups from benzene ring at the para position in relation to the hydroxyl of phenol. This chain is Pentachlorophenol 4-monooxygenase (pcpB), found in Sphingobium chlorophenolicum.